The sequence spans 391 residues: Phosphoglycerate kinase (391 aa).

Residues 21-23, arginine 36, 59-62, arginine 113, and arginine 146 contribute to the substrate site; these read DLN and HLGR. ATP is bound by residues lysine 197, glutamate 319, and 345–348; that span reads GGDT.

Belongs to the phosphoglycerate kinase family. As to quaternary structure, monomer.

It localises to the cytoplasm. It carries out the reaction (2R)-3-phosphoglycerate + ATP = (2R)-3-phospho-glyceroyl phosphate + ADP. It participates in carbohydrate degradation; glycolysis; pyruvate from D-glyceraldehyde 3-phosphate: step 2/5. This Shewanella sp. (strain W3-18-1) protein is Phosphoglycerate kinase.